Consider the following 292-residue polypeptide: uncharacterized protein (292 aa).

The next 5 membrane-spanning stretches (helical) occupy residues 57 to 77 (IISL…LTLI), 101 to 121 (VYVF…FNFM), 143 to 163 (LIYA…AVLI), 184 to 204 (VVIT…NFVL), and 271 to 291 (IAFL…DRGI).

Belongs to the CbiQ family.

The protein resides in the cell membrane. This is an uncharacterized protein from Methanocaldococcus jannaschii (strain ATCC 43067 / DSM 2661 / JAL-1 / JCM 10045 / NBRC 100440) (Methanococcus jannaschii).